An 89-amino-acid chain; its full sequence is Small ribosomal subunit protein bS20 (89 aa).

The protein belongs to the bacterial ribosomal protein bS20 family.

Binds directly to 16S ribosomal RNA. The protein is Small ribosomal subunit protein bS20 of Hahella chejuensis (strain KCTC 2396).